The following is a 62-amino-acid chain: uncharacterized protein (62 aa).

This is an uncharacterized protein from Escherichia coli (strain K12).